The primary structure comprises 343 residues: Mas-related G-protein coupled receptor member F (343 aa).

Topologically, residues 1–44 are extracellular; that stretch reads MAGNCSWEAHSTNQNKMCPGMSEARELYSRGFLTIEQIATLPPP. The N-linked (GlcNAc...) asparagine glycan is linked to Asn4. The chain crosses the membrane as a helical span at residues 45–66; the sequence is AVTNYIFLLLCLCGLVGNGLVL. The Cytoplasmic portion of the chain corresponds to 67–82; it reads WFFGFSIKRTPFSIYF. The chain crosses the membrane as a helical span at residues 83–104; that stretch reads LHLASADGMYLFSKAVIALLNM. The Extracellular segment spans residues 105–123; that stretch reads GTFLGSFPDYIRRVSRIVG. A helical membrane pass occupies residues 124-144; the sequence is LCTFFTGVSLLPAISIERCVS. Residues 145-160 lie on the Cytoplasmic side of the membrane; that stretch reads VIFPTWYWRRRPKRLS. A helical transmembrane segment spans residues 161 to 181; that stretch reads AGVCALLWMLSFLVTSIHNYF. The Extracellular portion of the chain corresponds to 182-198; the sequence is CMFLGHEAPGTVCRNMD. The helical transmembrane segment at 199–220 threads the bilayer; it reads IALGILLFFLFCPLMVLPCLAL. Residues 221–241 are Cytoplasmic-facing; sequence ILHVECRARRRQRSAKLNHVV. The helical transmembrane segment at 242 to 263 threads the bilayer; sequence LAIVSVFLVSSIYLGIDWFLFW. At 264–273 the chain is on the extracellular side; it reads VFQIPAPFPE. A helical membrane pass occupies residues 274–294; sequence YVTDLCICINSSAKPIVYFLA. Residues 295–343 are Cytoplasmic-facing; the sequence is GRDKSQRLWEPLRVVFQRALRDGAEPGDAASSTPNTVTMEMQCPSGNAS. The tract at residues 318 to 343 is disordered; it reads AEPGDAASSTPNTVTMEMQCPSGNAS. Over residues 324–343 the composition is skewed to polar residues; it reads ASSTPNTVTMEMQCPSGNAS.

This sequence belongs to the G-protein coupled receptor 1 family. Mas subfamily.

Its subcellular location is the cell membrane. In terms of biological role, orphan receptor. May bind to a neuropeptide and may regulate nociceptor function and/or development, including the sensation or modulation of pain. The chain is Mas-related G-protein coupled receptor member F (Mrgprf) from Mus musculus (Mouse).